The following is a 117-amino-acid chain: Immunoglobulin kappa variable 1-17 (117 aa).

The first 22 residues, 1 to 22 (MDMRVPAQLLGLLLLWFPGARC), serve as a signal peptide directing secretion. The framework-1 stretch occupies residues 23–45 (DIQMTQSPSSLSASVGDRVTITC). Residues 24 to 117 (IQMTQSPSSL…YYCLQHNSYP (94 aa)) enclose the Ig-like domain. Cysteine 45 and cysteine 110 are oxidised to a cystine. Residues 46–56 (RASQGIRNDLG) are complementarity-determining-1. The segment at 57 to 71 (WYQQKPGKAPKRLIY) is framework-2. The tract at residues 72 to 78 (AASSLQS) is complementarity-determining-2. The tract at residues 79 to 110 (GVPSRFSGSGSGTEFTLTISSLQPEDFATYYC) is framework-3. The interval 111-117 (LQHNSYP) is complementarity-determining-3.

Immunoglobulins are composed of two identical heavy chains and two identical light chains; disulfide-linked.

Its subcellular location is the secreted. The protein resides in the cell membrane. Its function is as follows. V region of the variable domain of immunoglobulin light chains that participates in the antigen recognition. Immunoglobulins, also known as antibodies, are membrane-bound or secreted glycoproteins produced by B lymphocytes. In the recognition phase of humoral immunity, the membrane-bound immunoglobulins serve as receptors which, upon binding of a specific antigen, trigger the clonal expansion and differentiation of B lymphocytes into immunoglobulins-secreting plasma cells. Secreted immunoglobulins mediate the effector phase of humoral immunity, which results in the elimination of bound antigens. The antigen binding site is formed by the variable domain of one heavy chain, together with that of its associated light chain. Thus, each immunoglobulin has two antigen binding sites with remarkable affinity for a particular antigen. The variable domains are assembled by a process called V-(D)-J rearrangement and can then be subjected to somatic hypermutations which, after exposure to antigen and selection, allow affinity maturation for a particular antigen. In Homo sapiens (Human), this protein is Immunoglobulin kappa variable 1-17.